The following is a 507-amino-acid chain: Protein MosB (507 aa).

The H-T-H motif DNA-binding region spans 256-275 (QAHGALYKGQHVGLLSDIGC). Residue lysine 282 is modified to N6-(pyridoxal phosphate)lysine.

The protein belongs to the DegT/DnrJ/EryC1 family.

Its function is as follows. Involved in the biosynthesis of the rhizopine 3-O-methyl-scyllo-inosamine. May have a regulatory role in controlling the housekeeping genes within the nodule which are involved in the biosynthesis of the rhizopine backbone. The sequence is that of Protein MosB (mosB) from Rhizobium meliloti (Ensifer meliloti).